The primary structure comprises 274 residues: Chromatin modification-related protein YNG2 (274 aa).

A disordered region spans residues 121-194 (EDEMESGPDF…ASTEREGTLD (74 aa)). Positions 166–180 (THREKSYNKGDDTAD) are enriched in basic and acidic residues. Residues 215–264 (NLYCFCQRVSFGEMVACDGPNCKYEWFHYECVNLTEPPKGTWYCPDCKQE) form a PHD-type zinc finger. C218, C220, C231, C236, H242, C245, C258, and C261 together coordinate Zn(2+).

This sequence belongs to the ING family. In terms of assembly, interacts with H3K4me3 and to a lesser extent with H3K4me2. Component of the NuA4 histone acetyltransferase complex.

It is found in the nucleus. Functionally, component of the NuA4 histone acetyltransferase complex which is involved in transcriptional activation of selected genes principally by acetylation of nucleosomal histone H4 and H2A. The NuA4 complex is also involved in DNA repair. Involved in cell cycle progression and meiosis. The protein is Chromatin modification-related protein YNG2 (YNG2) of Candida glabrata (strain ATCC 2001 / BCRC 20586 / JCM 3761 / NBRC 0622 / NRRL Y-65 / CBS 138) (Yeast).